We begin with the raw amino-acid sequence, 316 residues long: Pantothenate kinase (316 aa).

ATP is bound at residue 95-102 (GSVAVGKS).

It belongs to the prokaryotic pantothenate kinase family.

Its subcellular location is the cytoplasm. The catalysed reaction is (R)-pantothenate + ATP = (R)-4'-phosphopantothenate + ADP + H(+). The protein operates within cofactor biosynthesis; coenzyme A biosynthesis; CoA from (R)-pantothenate: step 1/5. This chain is Pantothenate kinase, found in Shewanella woodyi (strain ATCC 51908 / MS32).